A 163-amino-acid polypeptide reads, in one-letter code: Small ribosomal subunit protein uS5 (163 aa).

The S5 DRBM domain maps to 11–74 (LTDRVVHINR…EQAKKNLIRV (64 aa)).

Belongs to the universal ribosomal protein uS5 family. In terms of assembly, part of the 30S ribosomal subunit. Contacts proteins S4 and S8.

Its function is as follows. With S4 and S12 plays an important role in translational accuracy. Functionally, located at the back of the 30S subunit body where it stabilizes the conformation of the head with respect to the body. This is Small ribosomal subunit protein uS5 from Syntrophotalea carbinolica (strain DSM 2380 / NBRC 103641 / GraBd1) (Pelobacter carbinolicus).